Reading from the N-terminus, the 244-residue chain is Small ribosomal subunit protein uS3 (244 aa).

A KH type-2 domain is found at 39-110; the sequence is IRDYVRKNLS…QIRINVIEVE (72 aa). Residues 215 to 244 form a disordered region; sequence EDAAPSNVGQPRRRNQQRRRQQFEDRSNEG. Positions 225–234 are enriched in basic residues; that stretch reads PRRRNQQRRR. Residues 235 to 244 are compositionally biased toward basic and acidic residues; that stretch reads QQFEDRSNEG.

It belongs to the universal ribosomal protein uS3 family. Part of the 30S ribosomal subunit. Forms a tight complex with proteins S10 and S14.

Functionally, binds the lower part of the 30S subunit head. Binds mRNA in the 70S ribosome, positioning it for translation. This chain is Small ribosomal subunit protein uS3, found in Synechococcus sp. (strain ATCC 27144 / PCC 6301 / SAUG 1402/1) (Anacystis nidulans).